The sequence spans 102 residues: Small ribosomal subunit protein bS6 (102 aa).

Belongs to the bacterial ribosomal protein bS6 family.

Functionally, binds together with bS18 to 16S ribosomal RNA. This is Small ribosomal subunit protein bS6 from Desulfovibrio desulfuricans (strain ATCC 27774 / DSM 6949 / MB).